The sequence spans 255 residues: 5'-nucleotidase SurE (255 aa).

A divalent metal cation contacts are provided by aspartate 13, aspartate 14, serine 44, and asparagine 100.

It belongs to the SurE nucleotidase family. Requires a divalent metal cation as cofactor.

It localises to the cytoplasm. It catalyses the reaction a ribonucleoside 5'-phosphate + H2O = a ribonucleoside + phosphate. Its function is as follows. Nucleotidase that shows phosphatase activity on nucleoside 5'-monophosphates. This is 5'-nucleotidase SurE from Bacteroides fragilis (strain ATCC 25285 / DSM 2151 / CCUG 4856 / JCM 11019 / LMG 10263 / NCTC 9343 / Onslow / VPI 2553 / EN-2).